The sequence spans 445 residues: DNA primase DnaG (445 aa).

The 87-residue stretch at 166 to 252 (DAIVVVEGRS…SVEDLSRSEV (87 aa)) folds into the Toprim domain. Positions 172, 214, and 216 each coordinate Mg(2+). Positions 276 to 355 (EEMSQAGEST…NGDGPTIPSL (80 aa)) are disordered. The segment covering 284–298 (STTADGGAVAAATSD) has biased composition (low complexity). Residues 303–313 (NQPSPSSQTGS) are compositionally biased toward polar residues. Positions 324–337 (SVVDNSNATAVADA) are enriched in low complexity.

The protein belongs to the archaeal DnaG primase family. Forms a ternary complex with MCM helicase and DNA. Requires Mg(2+) as cofactor.

It catalyses the reaction ssDNA + n NTP = ssDNA/pppN(pN)n-1 hybrid + (n-1) diphosphate.. Its function is as follows. RNA polymerase that catalyzes the synthesis of short RNA molecules used as primers for DNA polymerase during DNA replication. The protein is DNA primase DnaG of Haloarcula marismortui (strain ATCC 43049 / DSM 3752 / JCM 8966 / VKM B-1809) (Halobacterium marismortui).